Reading from the N-terminus, the 360-residue chain is Chorismate synthase (360 aa).

Arg-46 lines the NADP(+) pocket. FMN contacts are provided by residues Arg-122–Ser-124, Gly-282, Lys-297–Ser-301, and Arg-324.

The protein belongs to the chorismate synthase family. Requires FMNH2 as cofactor.

The enzyme catalyses 5-O-(1-carboxyvinyl)-3-phosphoshikimate = chorismate + phosphate. It participates in metabolic intermediate biosynthesis; chorismate biosynthesis; chorismate from D-erythrose 4-phosphate and phosphoenolpyruvate: step 7/7. Functionally, catalyzes the anti-1,4-elimination of the C-3 phosphate and the C-6 proR hydrogen from 5-enolpyruvylshikimate-3-phosphate (EPSP) to yield chorismate, which is the branch point compound that serves as the starting substrate for the three terminal pathways of aromatic amino acid biosynthesis. This reaction introduces a second double bond into the aromatic ring system. This is Chorismate synthase from Archaeoglobus fulgidus (strain ATCC 49558 / DSM 4304 / JCM 9628 / NBRC 100126 / VC-16).